We begin with the raw amino-acid sequence, 280 residues long: Chlorophyll a-b binding protein CP29 (280 aa).

The interval 1–42 is disordered; it reads MVFKFPTPPGTQKKAGTTATKPAPKATTKKVATSTGTRSGGV. Val2 bears the N-acetylvaline mark. Thr7 carries the post-translational modification Phosphothreonine; in State 1 and State 2. The span at 10 to 37 shows a compositional bias: low complexity; the sequence is GTQKKAGTTATKPAPKATTKKVATSTGT. Position 17 is a phosphothreonine; in State 2 (Thr17). Phosphothreonine; in State 1 and State 2 is present on Thr33. Residue Tyr47 coordinates chlorophyll b. The chlorophyll a site is built by Phe73 and Ser79. At Ser103 the chain carries Phosphoserine; in State 2. Chlorophyll a contacts are provided by Glu137 and His140. 2 helical membrane-spanning segments follow: residues 143–163 and 176–196; these read WAML…VSWV and AGLS…ILVG. The chlorophyll b site is built by Ser183, Glu199, and Arg202. Residues Glu238, His241, Arg243, and Gln255 each contribute to the chlorophyll a site. A helical transmembrane segment spans residues 244–264; the sequence is LAMVSFFGYGVQALSTGEGAL.

This sequence belongs to the light-harvesting chlorophyll a/b-binding (LHC) protein family. As to quaternary structure, the LHC complex consists of chlorophyll a-b binding proteins. Binds at least 14 chlorophylls (8 Chl-a and 6 Chl-b) and carotenoids such as lutein and neoxanthin. is required as a cofactor. Reversible phosphorylation plays a role in the State transition process and determines the affinity of LHCII for PSI and PSII.

It localises to the plastid. The protein localises to the chloroplast thylakoid membrane. Functionally, the light-harvesting complex (LHC) functions as a light receptor, it captures and delivers excitation energy to photosystems with which it is closely associated. CP29 facilitates the State 1 to State 2 transition, where State I is induced by excess photosystem I (PSI) light and State 2 is induced by excess photosystem II (PSII) light. In Chlamydomonas reinhardtii (Chlamydomonas smithii), this protein is Chlorophyll a-b binding protein CP29.